The primary structure comprises 677 residues: Methionine--tRNA ligase (677 aa).

The 'HIGH' region signature appears at Pro-15–His-25. Zn(2+) is bound by residues Cys-146, Cys-149, Cys-159, and Cys-162. A 'KMSKS' region motif is present at residues Lys-333–Ser-337. Lys-336 provides a ligand contact to ATP. The 103-residue stretch at Asp-575–Lys-677 folds into the tRNA-binding domain.

The protein belongs to the class-I aminoacyl-tRNA synthetase family. MetG type 1 subfamily. In terms of assembly, homodimer. Requires Zn(2+) as cofactor.

It is found in the cytoplasm. The catalysed reaction is tRNA(Met) + L-methionine + ATP = L-methionyl-tRNA(Met) + AMP + diphosphate. Is required not only for elongation of protein synthesis but also for the initiation of all mRNA translation through initiator tRNA(fMet) aminoacylation. This chain is Methionine--tRNA ligase, found in Escherichia coli O17:K52:H18 (strain UMN026 / ExPEC).